We begin with the raw amino-acid sequence, 406 residues long: Sorting nexin-6 (406 aa).

N-acetylmethionine is present on Met-1. Position 2 is an N-acetylmethionine; in Sorting nexin-6, N-terminally processed (Met-2). An interaction with PIM1 region spans residues 2–179 (MEGLDDGPDF…NQDLSVRGKN (178 aa)). The 148-residue stretch at 26 to 173 (LQSDAALQVD…HVFLEYNQDL (148 aa)) folds into the PX domain. A 1,2-diacyl-sn-glycero-3-phospho-(1D-myo-inositol-4,5-bisphosphate) contacts are provided by residues 41–47 (SERDKVK), 100–106 (FDASREK), and 114–117 (EGSM). A phosphoserine mark is found at Ser-116 and Ser-194. The segment at 182–199 (EKLEDFFKNMVKSADGVI) is membrane-binding amphipathic helix. The BAR domain occupies 203–406 (VKDVDDFFEH…NCLAVLNGDT (204 aa)).

It belongs to the sorting nexin family. As to quaternary structure, forms heterodimers with BAR domain-containing sorting nexins SNX1 and SNX2. The heterodimers are proposed to self-assemble into helical arrays on the membrane to stabilize and expand local membrane curvature underlying endosomal tubule formation. Thought to be a component of the originally described retromer complex (also called SNX-BAR retromer) which is a pentamer containing the heterotrimeric retromer cargo-selective complex (CSC), also described as vacuolar protein sorting subcomplex (VPS), and a heterodimeric membrane-deforming subcomplex formed between SNX1 or SNX2 and SNX5 or SNX6 (also called SNX-BAR subcomplex); the respective CSC and SNX-BAR subcomplexes associate with low affinity. Interacts with SNX1, SNX2, VPS26A, VPS29, VPS35, CDKN1B, TGFB receptors, BACE1, BRMS1, PIP5K1C isoform 3. Interacts with DCTN1; the association with DCTN1 is involved in movement of retromer-c ontaining vesicles toward the TGN. Interacts with CDKN1B and GIT1. Interacts with PIM1; translocating SNX6 to the nucleus. In vitro phosphorylated by PIM1; not affecting PIM1-dependent nuclear translocation.

The protein resides in the early endosome. It is found in the early endosome membrane. The protein localises to the cytoplasmic vesicle. It localises to the cytoplasm. Its subcellular location is the nucleus. In terms of biological role, involved in several stages of intracellular trafficking. Interacts with membranes phosphatidylinositol 3,4-bisphosphate and/or phosphatidylinositol 4,5-bisphosphate. Acts in part as component of the retromer membrane-deforming SNX-BAR subcomplex. The SNX-BAR retromer mediates retrograde transport of cargo proteins from endosomes to the trans-Golgi network (TGN) and is involved in endosome-to-plasma membrane transport for cargo protein recycling. The SNX-BAR subcomplex functions to deform the donor membrane into a tubular profile called endosome-to-TGN transport carrier (ETC). Does not have in vitro vesicle-to-membrane remodeling activity. Involved in retrograde endosome-to-TGN transport of lysosomal enzyme receptor IGF2R. May function as link between transport vesicles and dynactin. Negatively regulates retrograde transport of BACE1 from the cell surface to the trans-Golgi network. Involved in E-cadherin sorting and degradation; inhibits PIP5K1C isoform 3-mediated E-cadherin degradation. In association with GIT1 involved in EGFR degradation. Promotes lysosomal degradation of CDKN1B. May contribute to transcription regulation. This is Sorting nexin-6 (SNX6) from Homo sapiens (Human).